Reading from the N-terminus, the 524-residue chain is 2-isopropylmalate synthase (524 aa).

A Pyruvate carboxyltransferase domain is found at 12-274; the sequence is VIIFDTTLRD…WNNIETTMLT (263 aa). Mn(2+) contacts are provided by Asp-21, His-209, His-211, and Asn-245. A regulatory domain region spans residues 398-524; the sequence is KLNSLTVIAG…EAVPAVAAAG (127 aa).

The protein belongs to the alpha-IPM synthase/homocitrate synthase family. LeuA type 1 subfamily. In terms of assembly, homodimer. It depends on Mn(2+) as a cofactor.

Its subcellular location is the cytoplasm. It carries out the reaction 3-methyl-2-oxobutanoate + acetyl-CoA + H2O = (2S)-2-isopropylmalate + CoA + H(+). It participates in amino-acid biosynthesis; L-leucine biosynthesis; L-leucine from 3-methyl-2-oxobutanoate: step 1/4. Functionally, catalyzes the condensation of the acetyl group of acetyl-CoA with 3-methyl-2-oxobutanoate (2-ketoisovalerate) to form 3-carboxy-3-hydroxy-4-methylpentanoate (2-isopropylmalate). This Rhodopseudomonas palustris (strain HaA2) protein is 2-isopropylmalate synthase.